The chain runs to 947 residues: Bifunctional glutamine synthetase adenylyltransferase/adenylyl-removing enzyme (947 aa).

The adenylyl removase stretch occupies residues 1 to 440 (MTPLSSPLSQ…VFNELIGDDE (440 aa)). The segment at 450-947 (SEPWRDVWQD…ASWRKWLVAV (498 aa)) is adenylyl transferase.

The protein belongs to the GlnE family. Requires Mg(2+) as cofactor.

The catalysed reaction is [glutamine synthetase]-O(4)-(5'-adenylyl)-L-tyrosine + phosphate = [glutamine synthetase]-L-tyrosine + ADP. The enzyme catalyses [glutamine synthetase]-L-tyrosine + ATP = [glutamine synthetase]-O(4)-(5'-adenylyl)-L-tyrosine + diphosphate. Involved in the regulation of glutamine synthetase GlnA, a key enzyme in the process to assimilate ammonia. When cellular nitrogen levels are high, the C-terminal adenylyl transferase (AT) inactivates GlnA by covalent transfer of an adenylyl group from ATP to specific tyrosine residue of GlnA, thus reducing its activity. Conversely, when nitrogen levels are low, the N-terminal adenylyl removase (AR) activates GlnA by removing the adenylyl group by phosphorolysis, increasing its activity. The regulatory region of GlnE binds the signal transduction protein PII (GlnB) which indicates the nitrogen status of the cell. The chain is Bifunctional glutamine synthetase adenylyltransferase/adenylyl-removing enzyme from Salmonella dublin (strain CT_02021853).